The chain runs to 529 residues: Bifunctional purine biosynthesis protein PurH (529 aa).

The MGS-like domain maps to 1-148 (MQQPRPIRRA…KNHKDVAIVV (148 aa)).

The protein belongs to the PurH family.

The catalysed reaction is (6R)-10-formyltetrahydrofolate + 5-amino-1-(5-phospho-beta-D-ribosyl)imidazole-4-carboxamide = 5-formamido-1-(5-phospho-D-ribosyl)imidazole-4-carboxamide + (6S)-5,6,7,8-tetrahydrofolate. It carries out the reaction IMP + H2O = 5-formamido-1-(5-phospho-D-ribosyl)imidazole-4-carboxamide. Its pathway is purine metabolism; IMP biosynthesis via de novo pathway; 5-formamido-1-(5-phospho-D-ribosyl)imidazole-4-carboxamide from 5-amino-1-(5-phospho-D-ribosyl)imidazole-4-carboxamide (10-formyl THF route): step 1/1. It participates in purine metabolism; IMP biosynthesis via de novo pathway; IMP from 5-formamido-1-(5-phospho-D-ribosyl)imidazole-4-carboxamide: step 1/1. This Serratia proteamaculans (strain 568) protein is Bifunctional purine biosynthesis protein PurH.